The chain runs to 321 residues: N-acetyl-gamma-glutamyl-phosphate reductase (321 aa).

Cys131 is an active-site residue.

The protein belongs to the NAGSA dehydrogenase family. Type 1 subfamily.

The protein resides in the cytoplasm. It carries out the reaction N-acetyl-L-glutamate 5-semialdehyde + phosphate + NADP(+) = N-acetyl-L-glutamyl 5-phosphate + NADPH + H(+). It participates in amino-acid biosynthesis; L-arginine biosynthesis; N(2)-acetyl-L-ornithine from L-glutamate: step 3/4. Catalyzes the NADPH-dependent reduction of N-acetyl-5-glutamyl phosphate to yield N-acetyl-L-glutamate 5-semialdehyde. This Christiangramia forsetii (strain DSM 17595 / CGMCC 1.15422 / KT0803) (Gramella forsetii) protein is N-acetyl-gamma-glutamyl-phosphate reductase.